The chain runs to 151 residues: UPF0561 protein C2orf68 homolog (151 aa).

A disordered region spans residues M1–G89. Basic and acidic residues-rich tracts occupy residues L32–E46 and R70–P85.

This sequence belongs to the UPF0561 family.

This chain is UPF0561 protein C2orf68 homolog, found in Xenopus laevis (African clawed frog).